The primary structure comprises 204 residues: Tat proofreading chaperone DmsD (204 aa).

The protein belongs to the TorD/DmsD family. DmsD subfamily.

In terms of biological role, required for biogenesis/assembly of DMSO reductase, but not for the interaction of the DmsA signal peptide with the Tat system. May be part of a chaperone cascade complex that facilitates a folding-maturation pathway for the substrate protein. The chain is Tat proofreading chaperone DmsD from Escherichia coli O6:H1 (strain CFT073 / ATCC 700928 / UPEC).